Here is a 442-residue protein sequence, read N- to C-terminus: GTPase Der (442 aa).

EngA-type G domains follow at residues R2–N167 and F175–M351. Residues G8–S15, D55–I59, N119–E122, G181–S188, D228–I232, and N293–D296 contribute to the GTP site. Positions R352–N436 constitute a KH-like domain.

It belongs to the TRAFAC class TrmE-Era-EngA-EngB-Septin-like GTPase superfamily. EngA (Der) GTPase family. Associates with the 50S ribosomal subunit.

In terms of biological role, GTPase that plays an essential role in the late steps of ribosome biogenesis. The chain is GTPase Der from Ureaplasma parvum serovar 3 (strain ATCC 27815 / 27 / NCTC 11736).